Reading from the N-terminus, the 326-residue chain is MTESVKKIAVTGAAGQIAYSLLWRIANGDVYGKNTPVELQLLEIPQAIGGAEGVAMELLDSAFPLLKNIVVTDKAEVAFDGTNAAFLVGAKPRGKGEERADLLTANGKIFGPQGKALNDNAADDIRVLVVGNPANTNALIAQHAAKDIPADRFNAMMRLDHNRGIAQLSEKLGRDKNDIEKFVVWGNHSAGQFPDITYATIGGEAISGLVDHDWYTGEFIPRVAKRGAEIIEVRGKSSAASAASSAIDHMHDWINGTDGQWRTAAIPSDGSYGVPEGLIFGFPTISEDGQWKIVQDLELSDFQKDGIARNVTELEEEREAVKDLLG.

12–18 contributes to the NAD(+) binding site; that stretch reads GAAGQIA. Substrate-binding residues include arginine 93 and arginine 99. NAD(+)-binding positions include asparagine 106, glutamine 113, and 130–132; that span reads VGN. Substrate contacts are provided by asparagine 132 and arginine 163. Histidine 188 serves as the catalytic Proton acceptor.

It belongs to the LDH/MDH superfamily. MDH type 2 family.

It catalyses the reaction (S)-malate + NAD(+) = oxaloacetate + NADH + H(+). In terms of biological role, catalyzes the reversible oxidation of malate to oxaloacetate. The protein is Malate dehydrogenase of Corynebacterium diphtheriae (strain ATCC 700971 / NCTC 13129 / Biotype gravis).